The sequence spans 493 residues: EGF-containing fibulin-like extracellular matrix protein 1 (493 aa).

The first 17 residues, 1 to 17, serve as a signal peptide directing secretion; it reads MLKALFLTMLTLALVKS. The region spanning 26–71 is the EGF-like 1; atypical domain; sequence YTQCTDGYEWDPVRQQCKDIDECDIVPDACKGGMKCVNHYGGYLCL. In terms of domain architecture, EGF-like 2; calcium-binding spans 173 to 213; sequence DIDECTAGTHNCRADQVCINLRGSFACQCPPGYQKRGEQCV. 15 disulfide bridges follow: Cys177–Cys190, Cys184–Cys199, Cys201–Cys212, Cys218–Cys228, Cys224–Cys237, Cys239–Cys252, Cys258–Cys268, Cys264–Cys277, Cys279–Cys292, Cys298–Cys309, Cys305–Cys318, Cys320–Cys332, Cys338–Cys350, Cys344–Cys359, and Cys365–Cys377. Positions 214 to 253 constitute an EGF-like 3; calcium-binding domain; it reads DIDECTIPPYCHQRCVNTPGSFYCQCSPGFQLAANNYTCV. Residue Asn249 is glycosylated (N-linked (GlcNAc...) asparagine). The EGF-like 4; calcium-binding domain occupies 254–293; that stretch reads DINECDASNQCAQQCYNILGSFICQCNQGYELSSDRLNCE. The segment at 259 to 493 is mediates interaction with TIMP3; the sequence is DASNQCAQQC…LTIIVGPFSF (235 aa). Residues 294–333 enclose the EGF-like 5; calcium-binding domain; it reads DIDECRTSSYLCQYQCVNEPGKFSCMCPQGYQVVRSRTCQ. The region spanning 334 to 378 is the EGF-like 6; calcium-binding domain; that stretch reads DINECETTNECREDEMCWNYHGGFRCYPRNPCQDPYILTPENRCV.

This sequence belongs to the fibulin family. Interacts with ECM1. Interacts with TIMP3. In terms of tissue distribution, in the eye, associated with photoreceptor outer and inner segment regions, the nerve fiber layer, outer nuclear layer and inner and outer plexiform layers of the retina.

Its subcellular location is the secreted. The protein resides in the extracellular space. The protein localises to the extracellular matrix. Binds EGFR, the EGF receptor, inducing EGFR autophosphorylation and the activation of downstream signaling pathways. May play a role in cell adhesion and migration. May function as a negative regulator of chondrocyte differentiation. In the olfactory epithelium, it may regulate glial cell migration, differentiation and the ability of glial cells to support neuronal neurite outgrowth. The sequence is that of EGF-containing fibulin-like extracellular matrix protein 1 (EFEMP1) from Homo sapiens (Human).